A 456-amino-acid polypeptide reads, in one-letter code: Outer membrane efflux protein BepC (456 aa).

An N-terminal signal peptide occupies residues 1–28; the sequence is MRYTVFKACKELVAAAVLLSGTVLTGQA. Residues 312–341 adopt a coiled-coil conformation; that stretch reads RTSAQIRQSKEQLGQARIEVDVVQDKVRQA.

Belongs to the outer membrane factor (OMF) (TC 1.B.17) family. As to quaternary structure, probably part of a tripartite efflux pump, which is composed of an outer membrane efflux protein, an inner membrane protein and a protein that expands the periplasmic space. Could form a tripartite pump with BepD and BepE or with BepF and BepG.

It is found in the cell outer membrane. Functionally, involved in the efflux of toxic and relatively hydrophobic compounds. Influences survival inside the host. The protein is Outer membrane efflux protein BepC (bepC) of Brucella suis biovar 1 (strain 1330).